The chain runs to 211 residues: SOSS complex subunit B1 (211 aa).

The segment at residues 22–92 (IVLETGRVTK…TLYTGRGGDL (71 aa)) is a DNA-binding region (OB). The tract at residues 110–211 (EPNPEYSAQQ…GKETRRSSKR (102 aa)) is disordered. Residues 115–128 (YSAQQAPNKTVQND) show a composition bias toward polar residues. Pro residues-rich tracts occupy residues 133-143 (APQPPTGPPAT) and 165-174 (PHPPHTPSHP).

It belongs to the SOSS-B family. SOSS-B1 subfamily. Component of the SOSS complex, composed of SOSS-B (SOSS-B1/NABP2 or SOSS-B2/NABP1), SOSS-A/INTS3 and SOSS-C/INIP. SOSS complexes containing SOSS-B1/NABP2 are more abundant than complexes containing SOSS-B2/NABP1. Directly interacts with ATM, SOSS-A/INTS3 and RAD51. Interacts with INTS7. Phosphorylated by ATM in response to DNA damage. Phosphorylation prevents degradation by the proteasome, hence stabilization of the protein and accumulation within cells. In terms of processing, ubiquitinated in a FBXL5-dependent manner, leading to proteasomal degradation.

It is found in the nucleus. Its function is as follows. Component of the SOSS complex, a multiprotein complex that functions downstream of the MRN complex to promote DNA repair and G2/M checkpoint. In the SOSS complex, acts as a sensor of single-stranded DNA that binds to single-stranded DNA, in particular to polypyrimidines. The SOSS complex associates with DNA lesions and influences diverse endpoints in the cellular DNA damage response including cell-cycle checkpoint activation, recombinational repair and maintenance of genomic stability. Required for efficient homologous recombination-dependent repair of double-strand breaks (DSBs) and ATM-dependent signaling pathways. The polypeptide is SOSS complex subunit B1 (NABP2) (Bos taurus (Bovine)).